Here is a 457-residue protein sequence, read N- to C-terminus: Glycine receptor subunit alpha-1 (457 aa).

The first 28 residues, 1–28, serve as a signal peptide directing secretion; the sequence is MYSFNTLRLYLWETIVFFSLAASKEAEA. The Extracellular portion of the chain corresponds to 29–250; sequence ARSASKPMSP…RFHLERQMGY (222 aa). An N-linked (GlcNAc...) asparagine glycan is attached at Asn-66. Glycine is bound by residues Arg-93 and Ser-157. A disulfide bridge links Cys-166 with Cys-180. Glu-220 and Asp-222 together coordinate Zn(2+). Cysteines 226 and 237 form a disulfide. Position 230–235 (230–235) interacts with strychnine; it reads YNTGKF. A glycine-binding site is contributed by Thr-232. His-243 is a Zn(2+) binding site. A helical membrane pass occupies residues 251–272; it reads YLIQMYIPSLLIVILSWISFWI. Over 273 to 277 the chain is Cytoplasmic; it reads NMDAA. A helical transmembrane segment spans residues 278-298; it reads PARVGLGITTVLTMTTQSSGS. Over 299 to 309 the chain is Extracellular; it reads RASLPKVSYVK. A helical transmembrane segment spans residues 310-330; sequence AIDIWMAVCLLFVFSALLEYA. Topologically, residues 331-425 are cytoplasmic; it reads AVNFVSRQHK…FIQRAKKIDK (95 aa). The segment at 391-410 is disordered; it reads KGANNSNTTNPPPAPSKSPE. Residues 426-446 traverse the membrane as a helical segment; it reads ISRIGFPMAFLIFNMFYWIIY. Residues 447 to 457 are Extracellular-facing; sequence KIVRREDVHNQ.

Belongs to the ligand-gated ion channel (TC 1.A.9) family. Glycine receptor (TC 1.A.9.3) subfamily. GLRA1 sub-subfamily. Interacts with GLRB to form heteropentameric channels; this is probably the predominant form in vivo. Heteropentamer composed of four GLRA1 subunits and one GLRB subunit. Heteropentamer composed of two GLRA1 and three GLRB. Heteropentamer composed of three GLRA1 and two GLRB. Homopentamer (in vitro). Both homopentamers and heteropentamers form functional ion channels, but their characteristics are subtly different. As to expression, detected on spinal cord neurons (at protein level). Detected in spinal cord.

It localises to the postsynaptic cell membrane. Its subcellular location is the synapse. The protein resides in the perikaryon. It is found in the cell projection. The protein localises to the dendrite. It localises to the cell membrane. It carries out the reaction chloride(in) = chloride(out). Its activity is regulated as follows. Channel opening is triggered by extracellular glycine. Channel characteristics depend on the subunit composition; heteropentameric channels are activated by lower glycine levels and display faster desensitization. In terms of biological role, subunit of heteromeric glycine-gated chloride channels. Plays an important role in the down-regulation of neuronal excitability. Contributes to the generation of inhibitory postsynaptic currents. Channel activity is potentiated by ethanol. Potentiation of channel activity by intoxicating levels of ethanol contribute to the sedative effects of ethanol. In Bos taurus (Bovine), this protein is Glycine receptor subunit alpha-1 (GLRA1).